A 354-amino-acid chain; its full sequence is Chorismate synthase (354 aa).

Arg48 and Arg54 together coordinate NADP(+). FMN contacts are provided by residues 125 to 127 (RSS), 238 to 239 (NA), Gly278, 293 to 297 (KPTSS), and Arg319.

This sequence belongs to the chorismate synthase family. As to quaternary structure, homotetramer. It depends on FMNH2 as a cofactor.

The catalysed reaction is 5-O-(1-carboxyvinyl)-3-phosphoshikimate = chorismate + phosphate. Its pathway is metabolic intermediate biosynthesis; chorismate biosynthesis; chorismate from D-erythrose 4-phosphate and phosphoenolpyruvate: step 7/7. Functionally, catalyzes the anti-1,4-elimination of the C-3 phosphate and the C-6 proR hydrogen from 5-enolpyruvylshikimate-3-phosphate (EPSP) to yield chorismate, which is the branch point compound that serves as the starting substrate for the three terminal pathways of aromatic amino acid biosynthesis. This reaction introduces a second double bond into the aromatic ring system. The polypeptide is Chorismate synthase (Buchnera aphidicola subsp. Acyrthosiphon pisum (strain 5A)).